Consider the following 101-residue polypeptide: Small ribosomal subunit protein uS10 (101 aa).

This sequence belongs to the universal ribosomal protein uS10 family. Part of the 30S ribosomal subunit.

Involved in the binding of tRNA to the ribosomes. This is Small ribosomal subunit protein uS10 from Methanocaldococcus jannaschii (strain ATCC 43067 / DSM 2661 / JAL-1 / JCM 10045 / NBRC 100440) (Methanococcus jannaschii).